The following is a 27-amino-acid chain: Conotoxin as14a (27 aa).

Intrachain disulfides connect Cys6-Cys26 and Cys10-Cys22.

It belongs to the conotoxin L superfamily. Expressed by the venom duct.

The protein localises to the secreted. In vivo, intracranial injection, elicits scratching and grooming activity in mice. This chain is Conotoxin as14a, found in Conus cancellatus (Cancellate cone).